Here is a 291-residue protein sequence, read N- to C-terminus: Glycine--tRNA ligase alpha subunit (291 aa).

It belongs to the class-II aminoacyl-tRNA synthetase family. Tetramer of two alpha and two beta subunits.

The protein resides in the cytoplasm. The enzyme catalyses tRNA(Gly) + glycine + ATP = glycyl-tRNA(Gly) + AMP + diphosphate. In Nitratidesulfovibrio vulgaris (strain DSM 19637 / Miyazaki F) (Desulfovibrio vulgaris), this protein is Glycine--tRNA ligase alpha subunit.